A 174-amino-acid polypeptide reads, in one-letter code: Achaete-scute homolog 3 (174 aa).

The segment at 92 to 105 (AFIRKRNERERQRV) is basic motif. In terms of domain architecture, bHLH spans 92–144 (AFIRKRNERERQRVKCVNEGYARLRRHLPEDYLEKRLSKVETLRAAIKYISYL). The segment at 106 to 144 (KCVNEGYARLRRHLPEDYLEKRLSKVETLRAAIKYISYL) is helix-loop-helix motif. Residues 153 to 174 (SETKKNPRTASCGSLDPALRVI) form a disordered region.

In terms of assembly, efficient DNA binding requires dimerization with another bHLH protein. Expressed in the salivary duct cells. Also expressed at lower levels in testis and epididymis. Expressed in the olfactory epithelium (OE), in a subset of apical microvillar cells.

It is found in the nucleus. Functionally, transcriptional repressor. Inhibits myogenesis. Plays a role in progenitor cells which differentiate into ductal and acinar, but not myoepithelial, cell lineages in the salivary glands. Involved in the functions of the microvillar cells and Bowman's glands and probably, in a non-cell-autonomous manner, in the development or regeneration of a complete olfactory epithelium (OE). The chain is Achaete-scute homolog 3 (Ascl3) from Mus musculus (Mouse).